The primary structure comprises 340 residues: Inactive hyaluronidase B (340 aa).

2 disulfides stabilise this stretch: Cys21-Cys310 and Cys187-Cys199. N-linked (GlcNAc...) asparagine glycosylation is found at Asn66 and Asn81.

This sequence belongs to the glycosyl hydrolase 56 family. Post-translationally, N-glycosylated on at least two Asn residues by identical heptasaccharide units composed of Man, GlcNAc, and Fuc residues in the molar ration of 3:2:2. As to expression, expressed by the venom gland.

It is found in the secreted. In terms of biological role, has no hyaluronidase activity. The chain is Inactive hyaluronidase B from Vespula vulgaris (Yellow jacket).